The chain runs to 448 residues: Extracellular serine protease (448 aa).

Residues 1–20 (MKLSHLSLAIISAITLAACG) form the signal peptide. A disordered region spans residues 87–109 (KELENQASDDEVDPTKTGVVGNL).

This sequence belongs to the peptidase S17 family. Requires a divalent metal cation as cofactor.

Functionally, this enzyme is a chymotrypsin-like serine protease. Degrades a variety of substrates present in the skin and hoof of the sheep, including elastin, keratin, fibrinogen and collagen. It seems to play an important role in the pathogenesis of sheep footrot. The chain is Extracellular serine protease (prvA) from Dichelobacter nodosus (Bacteroides nodosus).